The following is a 686-amino-acid chain: ATP-dependent zinc metalloprotease FTSH 6, chloroplastic (686 aa).

Positions 1 to 14 (MSPTAMSLTTTTSR) are enriched in polar residues. A disordered region spans residues 1-52 (MSPTAMSLTTTTSRLPICRAQGGGVAKEKRTTPPPAKITPPSSSSSEAAGLS). The transit peptide at 1–75 (MSPTAMSLTT…LGLTAARPAR (75 aa)) directs the protein to the chloroplast. Positions 39-52 (TPPSSSSSEAAGLS) are enriched in low complexity. A helical transmembrane segment spans residues 164-184 (VMLLDLLVNFGFPLLFVASLL). Residue 261 to 268 (GPPGTGKT) coordinates ATP. H483 serves as a coordination point for Zn(2+). Residue E484 is part of the active site. H487 and D562 together coordinate Zn(2+).

This sequence in the N-terminal section; belongs to the AAA ATPase family. In the C-terminal section; belongs to the peptidase M41 family. Zn(2+) serves as cofactor.

The protein resides in the plastid. It localises to the chloroplast thylakoid membrane. Functionally, probable ATP-dependent zinc metallopeptidase. The sequence is that of ATP-dependent zinc metalloprotease FTSH 6, chloroplastic (FTSH6) from Oryza sativa subsp. japonica (Rice).